The following is a 386-amino-acid chain: Cysteine protease Amb a 11.0101 (386 aa).

The N-terminal stretch at 1–22 is a signal peptide; it reads MEINKLVCFSFSLVLILGLVES. The tract at residues 6 to 20 is T-cell epitope. MHC class II peptide able to activate CD(4+) T cells of the ragweed pollen-allergic patients indicated by significantly increased IL-2 production compared to non-allergic individuals. Not recognized by IgE of the patients allergic to ragweed pollen; sequence LVCFSFSLVLILGLV. A propeptide spans 23-108 (activation peptide); that stretch reads FHYHERELES…SKISHFQALR (86 aa). N-linked (GlcNAc...) (complex) asparagine glycosylation occurs at Asn-127. 3 cysteine pairs are disulfide-bonded: Cys-152-Cys-193, Cys-186-Cys-226, and Cys-283-Cys-334. The active site involves Cys-155. The segment at 173 to 186 is B-cell epitope. Binds to IgE of the patients allergic to ragweed pollen; it reads GKLVKFSEQQLVDC. Active-site residues include His-289 and Asn-310. The interval 340-377 is disordered; it reads SSFPIMNDPNPPKDDPNGPKDDPDAPKDPKFKTTQRLQ. Residues 350–370 are compositionally biased toward basic and acidic residues; the sequence is PPKDDPNGPKDDPDAPKDPKF. Positions 371 to 386 are cleaved as a propeptide — removed in mature form; that stretch reads KTTQRLQGIRTKLLEL.

It belongs to the peptidase C1 family. In terms of assembly, homodimer. In terms of processing, autocatalytic proteolytic cleavage of N-terminal activation peptide. N-glycosylated. Glycosylation is not required for binding to IgE. In terms of tissue distribution, expressed in pollen (at protein and mRNA level).

Activated by L-cysteine. Inhibited by cysteine protease inhibitor E64 (L-trans-epoxysuccinyl-leucylamide-(4-guanido)-butane). Inhibited by cysteine/serine protease inhibitor leupeptin. Not inhibited by serine protease inhibitors 4-(2-aminoethyl)benzenesulfonyl fluoride hydrochloride (AEBSF) and phenylmethanesulfonyl fluoride (PMSF), metallo protease inhibitor bestatin or aspartic protease inhibitor pepstatin A. Functionally, cysteine protease. Hydrolyzes casein and synthetic peptide Boc-Val-Leu-Lys-7-amino-4-methylcoumarin (Boc-VLK-AMC) in vitro. The protein is Cysteine protease Amb a 11.0101 of Ambrosia artemisiifolia (Common ragweed).